Here is a 343-residue protein sequence, read N- to C-terminus: Selenide, water dikinase (343 aa).

Residue Sec15 is part of the active site. Residue Sec15 is a non-standard amino acid, selenocysteine. ATP contacts are provided by residues Lys18 and 45 to 47 (TAD). Mg(2+) is bound at residue Asp48. ATP-binding positions include Asp65, Asp88, and 135–137 (GHT). Asp88 lines the Mg(2+) pocket. Asp223 is a Mg(2+) binding site.

The protein belongs to the selenophosphate synthase 1 family. Class I subfamily. In terms of assembly, homodimer. Mg(2+) is required as a cofactor.

It catalyses the reaction hydrogenselenide + ATP + H2O = selenophosphate + AMP + phosphate + 2 H(+). Functionally, synthesizes selenophosphate from selenide and ATP. The polypeptide is Selenide, water dikinase (Carboxydothermus hydrogenoformans (strain ATCC BAA-161 / DSM 6008 / Z-2901)).